We begin with the raw amino-acid sequence, 162 residues long: Protein NrdI (162 aa).

Belongs to the NrdI family.

In terms of biological role, probably involved in ribonucleotide reductase function. The protein is Protein NrdI of Streptococcus pyogenes serotype M3 (strain ATCC BAA-595 / MGAS315).